The primary structure comprises 434 residues: Sulfide-quinone reductase (434 aa).

FAD-binding positions include 8–12, 34–35, and 77–78; these read GAGTG and SA. C160 acts as the Cysteine persulfide intermediate in catalysis. Residues I302 and G322 each contribute to the FAD site. Residue C356 is the Cysteine persulfide intermediate of the active site. K391 contributes to the FAD binding site.

This sequence belongs to the SQRD family. Homodimer. FAD serves as cofactor.

The protein localises to the membrane. It carries out the reaction n a quinone + n hydrogen sulfide + n H(+) = polysulfur(n-2) + n a quinol. In terms of biological role, catalyzes the oxidation of hydrogen sulfide, with the help of a quinone. Consecutive reaction cycles lead to the accumulation of a polysulfide product on the active site Cys residues; these products are released when they exceed a critical length, typically as cyclooctasulfur. The chain is Sulfide-quinone reductase from Acidithiobacillus ferrooxidans (strain ATCC 23270 / DSM 14882 / CIP 104768 / NCIMB 8455) (Ferrobacillus ferrooxidans (strain ATCC 23270)).